We begin with the raw amino-acid sequence, 63 residues long: Translational regulator CsrA (63 aa).

Belongs to the CsrA/RsmA family. In terms of assembly, homodimer; the beta-strands of each monomer intercalate to form a hydrophobic core, while the alpha-helices form wings that extend away from the core.

It localises to the cytoplasm. A key translational regulator that binds mRNA to regulate translation initiation and/or mRNA stability. Mediates global changes in gene expression, shifting from rapid growth to stress survival by linking envelope stress, the stringent response and the catabolite repression systems. Usually binds in the 5'-UTR; binding at or near the Shine-Dalgarno sequence prevents ribosome-binding, repressing translation, binding elsewhere in the 5'-UTR can activate translation and/or stabilize the mRNA. Its function is antagonized by small RNA(s). The polypeptide is Translational regulator CsrA (Haemophilus influenzae (strain PittEE)).